A 131-amino-acid polypeptide reads, in one-letter code: Profilin-6 (131 aa).

A disulfide bond links C13 and C115. The Involved in PIP2 interaction motif lies at 81 to 97 (AVIRGKKGSGGITVKKT). T111 is modified (phosphothreonine).

The protein belongs to the profilin family. In terms of assembly, occurs in many kinds of cells as a complex with monomeric actin in a 1:1 ratio. In terms of processing, phosphorylated by MAP kinases.

Its subcellular location is the cytoplasm. The protein resides in the cytoskeleton. Its function is as follows. Binds to actin and affects the structure of the cytoskeleton. At high concentrations, profilin prevents the polymerization of actin, whereas it enhances it at low concentrations. The protein is Profilin-6 of Zea mays (Maize).